A 37-amino-acid chain; its full sequence is Potassium channel toxin alpha-KTx 2.14 (37 aa).

3 disulfide bridges follow: C7–C28, C13–C33, and C17–C35.

Belongs to the short scorpion toxin superfamily. Potassium channel inhibitor family. Alpha-KTx 02 subfamily. Expressed by the venom gland.

It is found in the secreted. Reversibly blocks hKv1.1/KCNA1 (50% inhibition of current at 1 uM). Seems not to be voltage-dependent. The chain is Potassium channel toxin alpha-KTx 2.14 from Heteroctenus garridoi (Cuban scorpion).